The following is a 107-amino-acid chain: U1-lycotoxin-Ls1b (107 aa).

Residues 1–20 (MMKVLVVVALLVTLISYSSS) form the signal peptide. Residues 21–41 (EGIDDLEADELSSLMANEQTR) constitute a propeptide that is removed on maturation. 4 disulfides stabilise this stretch: C44–C59, C51–C68, C58–C86, and C70–C84.

It belongs to the neurotoxin 19 (CSTX) family. 04 (U1-Lctx) subfamily. Expressed by the venom gland.

It localises to the secreted. The sequence is that of U1-lycotoxin-Ls1b from Lycosa singoriensis (Wolf spider).